Reading from the N-terminus, the 195-residue chain is Putative NADH dehydrogenase/NAD(P)H nitroreductase Caul_0018 (195 aa).

This sequence belongs to the nitroreductase family. HadB/RutE subfamily. It depends on FMN as a cofactor.

The sequence is that of Putative NADH dehydrogenase/NAD(P)H nitroreductase Caul_0018 from Caulobacter sp. (strain K31).